We begin with the raw amino-acid sequence, 400 residues long: Phosphoglycerate kinase (400 aa).

Residues 24–26 (DFN), arginine 40, 63–66 (HFGR), arginine 121, and arginine 154 contribute to the substrate site. Residues lysine 205, glycine 296, glutamate 327, and 356–359 (GGDS) contribute to the ATP site.

It belongs to the phosphoglycerate kinase family. In terms of assembly, monomer.

Its subcellular location is the cytoplasm. It carries out the reaction (2R)-3-phosphoglycerate + ATP = (2R)-3-phospho-glyceroyl phosphate + ADP. It participates in carbohydrate degradation; glycolysis; pyruvate from D-glyceraldehyde 3-phosphate: step 2/5. This Thermosynechococcus vestitus (strain NIES-2133 / IAM M-273 / BP-1) protein is Phosphoglycerate kinase.